Reading from the N-terminus, the 248-residue chain is Thioredoxin-like protein AAED1, chloroplastic (248 aa).

A chloroplast-targeting transit peptide spans M1–S52. At A53 the chain carries N-acetylalanine.

This sequence belongs to the peroxiredoxin-like PRXL2 family. PRXL2C subfamily.

It is found in the plastid. The protein localises to the chloroplast. The polypeptide is Thioredoxin-like protein AAED1, chloroplastic (Arabidopsis thaliana (Mouse-ear cress)).